Here is a 360-residue protein sequence, read N- to C-terminus: sn-glycerol-3-phosphate import ATP-binding protein UgpC (360 aa).

Positions 4–235 (LSLKGVKKSY…PATTFVASFI (232 aa)) constitute an ABC transporter domain. Residue 37–44 (GPSGCGKS) participates in ATP binding.

This sequence belongs to the ABC transporter superfamily. sn-glycerol-3-phosphate importer (TC 3.A.1.1.3) family. In terms of assembly, the complex is composed of two ATP-binding proteins (UgpC), two transmembrane proteins (UgpA and UgpE) and a solute-binding protein (UgpB).

It is found in the cell inner membrane. The enzyme catalyses sn-glycerol 3-phosphate(out) + ATP + H2O = sn-glycerol 3-phosphate(in) + ADP + phosphate + H(+). In terms of biological role, part of the ABC transporter complex UgpBAEC involved in sn-glycerol-3-phosphate (G3P) import. Responsible for energy coupling to the transport system. This Burkholderia mallei (strain ATCC 23344) protein is sn-glycerol-3-phosphate import ATP-binding protein UgpC.